Reading from the N-terminus, the 319-residue chain is Thioredoxin reductase 1 (319 aa).

Residues 11 to 14 (SGPA), 40 to 41 (IA), glutamine 45, asparagine 54, valine 87, cysteine 145, aspartate 288, and 295 to 297 (RQA) contribute to the FAD site. Cysteine 142 and cysteine 145 are oxidised to a cystine. Residue serine 303 is modified to Phosphoserine.

Belongs to the class-II pyridine nucleotide-disulfide oxidoreductase family. As to quaternary structure, homodimer. Requires FAD as cofactor.

The protein resides in the cytoplasm. Its subcellular location is the mitochondrion intermembrane space. The enzyme catalyses [thioredoxin]-dithiol + NADP(+) = [thioredoxin]-disulfide + NADPH + H(+). Central component in the thioredoxin system. Reduces thioredoxins 1 and 2. The polypeptide is Thioredoxin reductase 1 (TRR1) (Saccharomyces cerevisiae (strain ATCC 204508 / S288c) (Baker's yeast)).